Here is a 340-residue protein sequence, read N- to C-terminus: Major histocompatibility complex class I-related gene protein (340 aa).

An N-terminal signal peptide occupies residues 1–22 (MGELMAFLLPLIIVLMVKHSNS). The alpha-1 stretch occupies residues 23-109 (RTHSLRYFRL…KRLQRHYNHS (87 aa)). The tract at residues 23 to 201 (RTHSLRYFRL…EYGKDTLQRT (179 aa)) is antigen-binding cleft. The Extracellular portion of the chain corresponds to 23–302 (RTHSLRYFRL…QESEAIPLVM (280 aa)). 8-(9H-purin-6-yl)-2-oxa-8-azabicyclo[3.3.1]nona-3,6-diene-4,6-dicarbaldehyde contacts are provided by Tyr-29 and Arg-31. 5-(2-oxoethylideneamino)-6-(D-ribitylamino)uracil is bound by residues Arg-31, Ser-46, and Lys-65. 5-(2-oxopropylideneamino)-6-(D-ribitylamino)uracil-binding residues include Arg-31, Ser-46, and Lys-65. 7-hydroxy-6-methyl-8-(1-D-ribityl)lumazine contacts are provided by Arg-31, Ser-46, and Lys-65. Lys-65 and His-80 together coordinate 8-(9H-purin-6-yl)-2-oxa-8-azabicyclo[3.3.1]nona-3,6-diene-4,6-dicarbaldehyde. Lys-65 serves as a coordination point for 2-amino-4-oxopteridine-6-carbaldehyde. Lys-65 serves as a coordination point for pyridoxal. Asn-107 is a glycosylation site (N-linked (GlcNAc...) asparagine). The segment at 110–201 (GSHTYQRMIG…EYGKDTLQRT (92 aa)) is alpha-2. Arg-116 provides a ligand contact to 8-(9H-purin-6-yl)-2-oxa-8-azabicyclo[3.3.1]nona-3,6-diene-4,6-dicarbaldehyde. The 5-(2-oxoethylideneamino)-6-(D-ribitylamino)uracil site is built by Arg-116, Tyr-174, and Gln-175. The 5-(2-oxopropylideneamino)-6-(D-ribitylamino)uracil site is built by Arg-116, Tyr-174, and Gln-175. 3 residues coordinate 7-hydroxy-6-methyl-8-(1-D-ribityl)lumazine: Arg-116, Tyr-174, and Gln-175. 2 disulfide bridges follow: Cys-120-Cys-183 and Cys-222-Cys-278. Residues 202 to 293 (EPPLVRVNRK…GVHMVLQVPQ (92 aa)) are alpha-3. The Ig-like C1-type domain maps to 203 to 282 (PPLVRVNRKE…SNLYSCHVEH (80 aa)). Residues 294–302 (ESEAIPLVM) form a connecting peptide region. The helical transmembrane segment at 303 to 323 (KAVSGSIVFVIVLTGVGVLVW) threads the bilayer. The Cytoplasmic portion of the chain corresponds to 324–340 (RRRPREQNGAVYLPTPD).

The protein belongs to the MHC class I family. In terms of assembly, heterotrimer that consists of MR1, B2M and metabolite antigen. Major classes of metabolite ligands presented by MR1 include riboflavin-related antigens, pyrimidines and ribityl lumazines, nucleobase adducts and folate derivatives. Forms reversible covalent Schiff base complexes with microbial pyrimidine-based metabolite, which serves as a molecular switch triggering complete folding, stable association with B2M and translocation of the ternary complex from endoplasmic reticulum to the plasma membrane. Alternatively, forms non-Schiff base complexes with ribityl lumazines. On antigen-presenting cells, the ternary complex interacts with TCR on MR1-restricted T cells. Interacts with TAPBP and TAPBPL chaperones in the endoplasmic reticulum. TAPBP associated or not with MHC class I peptide loading complex binds ligand-free MR1 or MR1-B2M complex, providing for stable MR1 pools ready for metabolite antigen processing. TAPBPL interacts with MR1 in a ligand-independent way; this interaction may stabilize MR1 pool and facilitate ligand loading and dissociation. Structurally, MR1-B2M heterodimer adopts a topology similar to classical MHC class I molecules, with alpha-1 and alpha-2 domains of MR1 forming the antigen-binding cleft composed of two alpha-helices resting on a floor of 7-stranded anti-parallel beta-pleated sheet. MR1-B2M heterodimer (via alpha-helices) interacts with TCR (via CDR domains). Post-translationally, N-glycosylated.

Its subcellular location is the cell membrane. It localises to the endoplasmic reticulum membrane. The protein resides in the golgi apparatus membrane. It is found in the early endosome membrane. The protein localises to the late endosome membrane. Antigen-presenting molecule specialized in displaying microbial pyrimidine-based metabolites to alpha-beta T cell receptors (TCR) on innate-type mucosal-associated invariant T (MAIT) cells. In complex with B2M preferentially presents riboflavin-derived metabolites to semi-invariant TCRs on MAIT cells, guiding immune surveillance of the microbial metabolome at mucosal epithelial barriers. Signature pyrimidine-based microbial antigens are generated via non-enzymatic condensation of metabolite intermediates of the riboflavin pathway with by-products arising from other metabolic pathways such as glycolysis. Typical potent antigenic metabolites are 5-(2-oxoethylideneamino)-6-D-ribitylaminouracil (5-OE-RU) and 5-(2-oxopropylideneamino)-6-D-ribitylaminouracil (5-OP-RU), products of condensation of 5-amino-6-D-ribityaminouracil (5-A-RU) with glyoxal or methylglyoxal by-products, respectively. May present microbial antigens to various MAIT cell subsets, providing for unique recognition of diverse microbes, including pathogens that do not synthesize riboflavin. Upon antigen recognition, elicits rapid innate-type MAIT cell activation to eliminate pathogenic microbes by directly killing infected cells. During T cell development, drives thymic selection and post-thymic terminal differentiation of MAIT cells in a process dependent on commensal microflora. Acts as an immune sensor of cancer cell metabolome. May present a tumor-specific or -associated metabolite essential for cancer cell survival to a pan-cancer TCR on a non-MAIT CD8-positive T cell clone, triggering T cell-mediated killing of a wide range of cancer cell types. May present tumor-enriched pyridoxal and pyridoxal 5'-phosphate antigens, enabling preferential recognition of cancer cells. Presents nucleobase carbonyl adducts generated during oxidative stress. Captures M3Ade, a nucleobase adduct composed of one adenine modified by a malondialdehyde trimer, for recognition by MR1-restricted T cell clones expressing a polyclonal TCR repertoire. This is Major histocompatibility complex class I-related gene protein from Pongo pygmaeus (Bornean orangutan).